Here is a 610-residue protein sequence, read N- to C-terminus: Phosphomethylpyrimidine synthase (610 aa).

Substrate is bound by residues asparagine 216, methionine 245, tyrosine 274, histidine 310, 330 to 332, 371 to 374, and glutamate 410; these read SRG and DGLR. Zn(2+) is bound at residue histidine 414. Tyrosine 437 contacts substrate. Histidine 478 serves as a coordination point for Zn(2+). Positions 558, 561, and 566 each coordinate [4Fe-4S] cluster.

Belongs to the ThiC family. In terms of assembly, homodimer. [4Fe-4S] cluster is required as a cofactor.

It catalyses the reaction 5-amino-1-(5-phospho-beta-D-ribosyl)imidazole + S-adenosyl-L-methionine = 4-amino-2-methyl-5-(phosphooxymethyl)pyrimidine + CO + 5'-deoxyadenosine + formate + L-methionine + 3 H(+). It participates in cofactor biosynthesis; thiamine diphosphate biosynthesis. Functionally, catalyzes the synthesis of the hydroxymethylpyrimidine phosphate (HMP-P) moiety of thiamine from aminoimidazole ribotide (AIR) in a radical S-adenosyl-L-methionine (SAM)-dependent reaction. In Rhizobium etli (strain ATCC 51251 / DSM 11541 / JCM 21823 / NBRC 15573 / CFN 42), this protein is Phosphomethylpyrimidine synthase.